The chain runs to 101 residues: Large ribosomal subunit protein uL23 (101 aa).

This sequence belongs to the universal ribosomal protein uL23 family. Part of the 50S ribosomal subunit. Contacts protein L29, and trigger factor when it is bound to the ribosome.

In terms of biological role, one of the early assembly proteins it binds 23S rRNA. One of the proteins that surrounds the polypeptide exit tunnel on the outside of the ribosome. Forms the main docking site for trigger factor binding to the ribosome. This Haemophilus ducreyi (strain 35000HP / ATCC 700724) protein is Large ribosomal subunit protein uL23.